The following is a 146-amino-acid chain: DNA utilization protein HofO (146 aa).

A helical transmembrane segment spans residues 20–37; that stretch reads WAFWLLMLVTLIFLSSTH.

It localises to the cell inner membrane. Its function is as follows. Required for the use of extracellular DNA as a nutrient. This is DNA utilization protein HofO (hofO) from Escherichia coli (strain K12).